The following is a 239-amino-acid chain: Sugar fermentation stimulation protein homolog (239 aa).

It belongs to the SfsA family.

The sequence is that of Sugar fermentation stimulation protein homolog from Maridesulfovibrio salexigens (strain ATCC 14822 / DSM 2638 / NCIMB 8403 / VKM B-1763) (Desulfovibrio salexigens).